We begin with the raw amino-acid sequence, 266 residues long: UPF0354 protein lmo1608 (266 aa).

The protein belongs to the UPF0354 family.

This Listeria monocytogenes serovar 1/2a (strain ATCC BAA-679 / EGD-e) protein is UPF0354 protein lmo1608.